The sequence spans 229 residues: Somatolactin (229 aa).

Positions 1–24 (MHLVSVIQRGVWAVLLWPNLLASS) are cleaved as a signal peptide. 3 disulfides stabilise this stretch: Cys-29–Cys-39, Cys-87–Cys-203, and Cys-220–Cys-228. N-linked (GlcNAc...) asparagine glycans are attached at residues Asn-143 and Asn-175.

It belongs to the somatotropin/prolactin family.

The protein resides in the secreted. This Cyclopterus lumpus (Lumpsucker) protein is Somatolactin.